Consider the following 335-residue polypeptide: Coiled-coil domain-containing protein 68 (335 aa).

Residues 101 to 305 (QLLEMNKENE…KTQVALSSET (205 aa)) are a coiled coil.

In terms of assembly, interacts with CEP170. In terms of tissue distribution, expressed in bone marrow, colon, small intestine, spleen, testis, trachea and cutaneous T-cell lymphoma (CTCL).

The protein localises to the cytoplasm. Its subcellular location is the cytoskeleton. It is found in the microtubule organizing center. The protein resides in the centrosome. It localises to the centriole. Its function is as follows. Centriolar protein required for centriole subdistal appendage assembly and microtubule anchoring in interphase cells. Together with CCDC120, cooperate with subdistal appendage components ODF2, NIN and CEP170 for hierarchical subdistal appendage assembly. The polypeptide is Coiled-coil domain-containing protein 68 (CCDC68) (Homo sapiens (Human)).